Consider the following 336-residue polypeptide: HTH-type transcriptional regulator AscG (336 aa).

An HTH lacI-type domain is found at 2–56 (TTMLEVAKRAGVSKATVSRVLSGNGYVSQETKDRVFQAVEESGYRPNLLARNLSA). The H-T-H motif DNA-binding region spans 4 to 23 (MLEVAKRAGVSKATVSRVLS).

In terms of biological role, repressor of the asc operon. The cryptic operon is activated by the insertion of IS186 into the ascG gene. The sequence is that of HTH-type transcriptional regulator AscG (ascG) from Escherichia coli (strain K12).